A 374-amino-acid polypeptide reads, in one-letter code: ATPase ASNA1 homolog (374 aa).

Residue lysine 44–threonine 51 coordinates ATP. Aspartate 73 is an active-site residue. Positions 244 and 271 each coordinate ATP.

It belongs to the arsA ATPase family. Homodimer.

The protein resides in the cytoplasm. Its subcellular location is the endoplasmic reticulum. Its function is as follows. ATPase required for the post-translational delivery of tail-anchored (TA) proteins to the endoplasmic reticulum. Recognizes and selectively binds the transmembrane domain of TA proteins in the cytosol. This complex then targets to the endoplasmic reticulum by membrane-bound receptors, where the tail-anchored protein is released for insertion. This process is regulated by ATP binding and hydrolysis. ATP binding drives the homodimer towards the closed dimer state, facilitating recognition of newly synthesized TA membrane proteins. ATP hydrolysis is required for insertion. Subsequently, the homodimer reverts towards the open dimer state, lowering its affinity for the membrane-bound receptor, and returning it to the cytosol to initiate a new round of targeting. This is ATPase ASNA1 homolog from Plasmodium vivax (strain Salvador I).